The following is a 264-amino-acid chain: 3-methyl-2-oxobutanoate hydroxymethyltransferase (264 aa).

The Mg(2+) site is built by D45 and D84. 3-methyl-2-oxobutanoate contacts are provided by residues 45–46 (DS), D84, and K112. E114 is a Mg(2+) binding site. The active-site Proton acceptor is E181.

It belongs to the PanB family. Homodecamer; pentamer of dimers. The cofactor is Mg(2+).

The protein localises to the cytoplasm. It catalyses the reaction 3-methyl-2-oxobutanoate + (6R)-5,10-methylene-5,6,7,8-tetrahydrofolate + H2O = 2-dehydropantoate + (6S)-5,6,7,8-tetrahydrofolate. Its pathway is cofactor biosynthesis; (R)-pantothenate biosynthesis; (R)-pantoate from 3-methyl-2-oxobutanoate: step 1/2. Functionally, catalyzes the reversible reaction in which hydroxymethyl group from 5,10-methylenetetrahydrofolate is transferred onto alpha-ketoisovalerate to form ketopantoate. This chain is 3-methyl-2-oxobutanoate hydroxymethyltransferase, found in Pectobacterium atrosepticum (strain SCRI 1043 / ATCC BAA-672) (Erwinia carotovora subsp. atroseptica).